We begin with the raw amino-acid sequence, 382 residues long: MGIHGLAKLIADVAPAAIKEHDIKSYFGRKVAVDASMCIYQFLIAVRQDGNMLQNEEGETTSHLMGMFYRTIRMLEHGIKPVYVFDGKPPQMKSGELAKRSERRAEAEKLLEAAEEAGEVENIEKFNKRLVKVTKQHNEECKKLLSLMGIPYVDAPCEAEATCAALVKAGKVYAAATEDMDALTFGTPVLLRHLTASEAKKLPIQEFHLNRVFQDIGINHEQFVDLCILLGSDYCETIRGIGPKRAIDLIRQHKTIEEIIDNIDLKKYPIPENWLHKEARQLFLEPEVIDADITELKWTEPDEEGLVAFMCGEKQFSEDRIRNGAKKLAKNRQGSTQGRLDDFFKVTGSISSTKRKEVESKGSTKKKSKTGGTPAGKFKRGK.

Residues 1-104 (MGIHGLAKLI…GELAKRSERR (104 aa)) form an N-domain region. Aspartate 34 serves as a coordination point for Mg(2+). DNA-binding residues include arginine 47 and arginine 70. Mg(2+) is bound by residues aspartate 86, glutamate 158, glutamate 160, aspartate 179, and aspartate 181. The I-domain stretch occupies residues 122 to 253 (NIEKFNKRLV…KRAIDLIRQH (132 aa)). Glutamate 158 serves as a coordination point for DNA. DNA contacts are provided by glycine 231 and aspartate 233. A Mg(2+)-binding site is contributed by aspartate 233. Residues 336–344 (TQGRLDDFF) are interaction with PCNA. A disordered region spans residues 352-382 (STKRKEVESKGSTKKKSKTGGTPAGKFKRGK).

This sequence belongs to the XPG/RAD2 endonuclease family. FEN1 subfamily. As to quaternary structure, interacts with PCNA. Three molecules of fen1 bind to one PCNA trimer with each molecule binding to one PCNA monomer. PCNA stimulates the nuclease activity without altering cleavage specificity. Requires Mg(2+) as cofactor. Phosphorylated. Phosphorylation upon DNA damage induces relocalization to the nuclear plasma.

It is found in the nucleus. It localises to the nucleolus. Its subcellular location is the nucleoplasm. The protein localises to the mitochondrion. Functionally, structure-specific nuclease with 5'-flap endonuclease and 5'-3' exonuclease activities involved in DNA replication and repair. During DNA replication, cleaves the 5'-overhanging flap structure that is generated by displacement synthesis when DNA polymerase encounters the 5'-end of a downstream Okazaki fragment. It enters the flap from the 5'-end and then tracks to cleave the flap base, leaving a nick for ligation. Also involved in the long patch base excision repair (LP-BER) pathway, by cleaving within the apurinic/apyrimidinic (AP) site-terminated flap. Acts as a genome stabilization factor that prevents flaps from equilibrating into structures that lead to duplications and deletions. Also possesses 5'-3' exonuclease activity on nicked or gapped double-stranded DNA, and exhibits RNase H activity. Also involved in replication and repair of rDNA and in repairing mitochondrial DNA. The polypeptide is Flap endonuclease 1-B (fen1-b) (Xenopus laevis (African clawed frog)).